Here is a 239-residue protein sequence, read N- to C-terminus: Uridylate kinase (239 aa).

12-15 (KLSG) is a binding site for ATP. An involved in allosteric activation by GTP region spans residues 20–25 (GDQGAG). Gly54 serves as a coordination point for UMP. ATP is bound by residues Gly55 and Arg59. Residues Asp74 and 135-142 (TGNPFFTT) each bind UMP. ATP is bound by residues Thr162, Tyr168, and Asp171.

The protein belongs to the UMP kinase family. In terms of assembly, homohexamer.

The protein resides in the cytoplasm. The enzyme catalyses UMP + ATP = UDP + ADP. It participates in pyrimidine metabolism; CTP biosynthesis via de novo pathway; UDP from UMP (UMPK route): step 1/1. With respect to regulation, allosterically activated by GTP. Inhibited by UTP. Its function is as follows. Catalyzes the reversible phosphorylation of UMP to UDP. In Methylococcus capsulatus (strain ATCC 33009 / NCIMB 11132 / Bath), this protein is Uridylate kinase.